Here is a 248-residue protein sequence, read N- to C-terminus: MSKRIKCTLSYDGTHFFGYQIQPGKRTVQGELERVLEQMHKGKAIRVTASGRTDAGVHAYGQVIHFDTFLSLSPDQWKKALNAQLPDDIVIKDVQEADPSFHARFSAKAKEYRYKVRIAQERDVFLRNYCYHYPYPLDMEAMRHALRLIEGTHDFTSFCSAKTDVDDRVRTIYKADMAMHDDLLEFCFIGNGFLYNMVRIIVGTILEVGQGKRSIDSISHAFEAKDRQFAGKTAPPQGLYLWKVYYDN.

D54 serves as the catalytic Nucleophile. Y112 contacts substrate.

It belongs to the tRNA pseudouridine synthase TruA family. In terms of assembly, homodimer.

The catalysed reaction is uridine(38/39/40) in tRNA = pseudouridine(38/39/40) in tRNA. Its function is as follows. Formation of pseudouridine at positions 38, 39 and 40 in the anticodon stem and loop of transfer RNAs. The polypeptide is tRNA pseudouridine synthase A (Geobacillus sp. (strain WCH70)).